Reading from the N-terminus, the 760-residue chain is MSELNEKLATAWEGFTKGDWQNEVNVRDFIQKNYTPYEGDESFLAGATEATTTLWDKVMEGVKLENRTHAPVDFDTAVASTITSHDAGYINKQLEKIVGLQTEAPLKRALIPFGGIKMIEGSCKAYNRELDPMIKKIFTEYRKTHNQGVFDVYTPDILRCRKSGVLTGLPDAYGRGRIIGDYRRVALYGIDYLMKDKLAQFTSLQADLENGVNLEQTIRLREEIAEQHRALGQMKEMAAKYGYDISGPATNAQEAIQWTYFGYLAAVKSQNGAAMSFGRTSTFLDVYIERDLKAGKITEQEAQEMVDHLVMKLRMVRFLRTPEYDELFSGDPIWATESIGGMGLDGRTLVTKNSFRFLNTLYTMGPSPEPNMTILWSEKLPLNFKKFAAKVSIDTSSLQYENDDLMRPDFNNDDYAIACCVSPMIVGKQMQFFGARANLAKTMLYAINGGVDEKLKMQVGPKSEPIKGDVLNYDEVMERMDHFMDWLAKQYITALNIIHYMHDKYSYEASLMALHDRDVIRTMACGIAGLSVAADSLSAIKYAKVKPIRDEDGLAIDFEIEGEYPQFGNNDPRVDDLAVDLVERFMKKIQKLHTYRDAIPTQSVLTITSNVVYGKKTGNTPDGRRAGAPFGPGANPMHGRDQKGAVASLTSVAKLPFAYAKDGISYTFSIVPNALGKDDEVRKTNLAGLMDGYFHHEASIEGGQHLNVNVMNREMLLDAMENPEKYPQLTIRVSGYAVRFNSLTKEQQQDVITRTFTQSM.

The PFL domain occupies E3 to R625. N6-acetyllysine; alternate is present on K63. N6-succinyllysine; alternate is present on K63. An N6-succinyllysine modification is found at K107. At K117 the chain carries N6-acetyllysine; alternate. K117 is subject to N6-succinyllysine; alternate. K124 is subject to N6-succinyllysine. K195 carries the post-translational modification N6-acetyllysine; alternate. The residue at position 195 (K195) is an N6-succinyllysine; alternate. The S-acetylcysteine intermediate role is filled by C419. The active-site Cysteine radical intermediate is C420. Position 454 is an N6-acetyllysine; alternate (K454). Position 454 is an N6-succinyllysine; alternate (K454). K467 carries the post-translational modification N6-succinyllysine. N6-acetyllysine occurs at positions 541 and 591. Residues P632–M760 form the Glycine radical domain. The residue at position 654 (K654) is an N6-succinyllysine. G735 carries the post-translational modification Glycine radical.

This sequence belongs to the glycyl radical enzyme (GRE) family. PFL subfamily. As to quaternary structure, homodimer. Interacts specifically with FocA.

It is found in the cytoplasm. It carries out the reaction formate + acetyl-CoA = pyruvate + CoA. Its pathway is fermentation; pyruvate fermentation; formate from pyruvate: step 1/1. Functionally, catalyzes the conversion of pyruvate to formate and acetyl-CoA. In addition, may be involved in the control of the activity of the formate channel FocA, via direct interaction with FocA. The sequence is that of Formate acetyltransferase 1 (pflB) from Escherichia coli (strain K12).